The following is a 282-amino-acid chain: Formamidopyrimidine-DNA glycosylase (282 aa).

The Schiff-base intermediate with DNA role is filled by proline 2. Glutamate 3 acts as the Proton donor in catalysis. Lysine 60 serves as the catalytic Proton donor; for beta-elimination activity. DNA is bound by residues histidine 99, arginine 118, and lysine 163. The FPG-type zinc-finger motif lies at 248 to 282; that stretch reads LVYRRSGKNCKKCGEKILREKICGRSTHWCPNCQK. The active-site Proton donor; for delta-elimination activity is arginine 272.

The protein belongs to the FPG family. Monomer. Zn(2+) serves as cofactor.

The catalysed reaction is Hydrolysis of DNA containing ring-opened 7-methylguanine residues, releasing 2,6-diamino-4-hydroxy-5-(N-methyl)formamidopyrimidine.. It catalyses the reaction 2'-deoxyribonucleotide-(2'-deoxyribose 5'-phosphate)-2'-deoxyribonucleotide-DNA = a 3'-end 2'-deoxyribonucleotide-(2,3-dehydro-2,3-deoxyribose 5'-phosphate)-DNA + a 5'-end 5'-phospho-2'-deoxyribonucleoside-DNA + H(+). In terms of biological role, involved in base excision repair of DNA damaged by oxidation or by mutagenic agents. Acts as a DNA glycosylase that recognizes and removes damaged bases. Has a preference for oxidized purines, such as 7,8-dihydro-8-oxoguanine (8-oxoG). Has AP (apurinic/apyrimidinic) lyase activity and introduces nicks in the DNA strand. Cleaves the DNA backbone by beta-delta elimination to generate a single-strand break at the site of the removed base with both 3'- and 5'-phosphates. The protein is Formamidopyrimidine-DNA glycosylase of Prochlorococcus marinus (strain NATL1A).